The chain runs to 334 residues: Phosphoribosylformylglycinamidine cyclo-ligase (334 aa).

Belongs to the AIR synthase family.

The protein localises to the cytoplasm. The enzyme catalyses 2-formamido-N(1)-(5-O-phospho-beta-D-ribosyl)acetamidine + ATP = 5-amino-1-(5-phospho-beta-D-ribosyl)imidazole + ADP + phosphate + H(+). The protein operates within purine metabolism; IMP biosynthesis via de novo pathway; 5-amino-1-(5-phospho-D-ribosyl)imidazole from N(2)-formyl-N(1)-(5-phospho-D-ribosyl)glycinamide: step 2/2. This is Phosphoribosylformylglycinamidine cyclo-ligase from Pyrococcus furiosus (strain ATCC 43587 / DSM 3638 / JCM 8422 / Vc1).